Reading from the N-terminus, the 216-residue chain is Protein Syd (216 aa).

Belongs to the Syd family.

The protein localises to the cell inner membrane. Functionally, interacts with the SecY protein in vivo. May bind preferentially to an uncomplexed state of SecY, thus functioning either as a chelating agent for excess SecY in the cell or as a regulatory factor that negatively controls the translocase function. This is Protein Syd from Shewanella sp. (strain MR-7).